A 66-amino-acid polypeptide reads, in one-letter code: Large ribosomal subunit protein bL35 (66 aa).

It belongs to the bacterial ribosomal protein bL35 family.

In Jannaschia sp. (strain CCS1), this protein is Large ribosomal subunit protein bL35.